Here is a 335-residue protein sequence, read N- to C-terminus: Probable peptide ABC transporter ATP-binding protein y4tR (335 aa).

An ABC transporter domain is found at 15 to 264; sequence VRDLETHFYG…PTHPYTRALM (250 aa). 49–56 contacts ATP; sequence GESGCGKS.

It belongs to the ABC transporter superfamily.

The protein resides in the cell inner membrane. Probably part of a binding-protein-dependent transport system y4tOPQRS for a peptide. Probably responsible for energy coupling to the transport system. The polypeptide is Probable peptide ABC transporter ATP-binding protein y4tR (Sinorhizobium fredii (strain NBRC 101917 / NGR234)).